Reading from the N-terminus, the 208-residue chain is Thymidylate kinase (208 aa).

ATP is bound at residue 9-16 (GGEGCGKS).

Belongs to the thymidylate kinase family.

The catalysed reaction is dTMP + ATP = dTDP + ADP. In terms of biological role, phosphorylation of dTMP to form dTDP in both de novo and salvage pathways of dTTP synthesis. The polypeptide is Thymidylate kinase (Dehalococcoides mccartyi (strain CBDB1)).